A 300-amino-acid chain; its full sequence is Enoyl-CoA hydratase domain-containing protein 3, mitochondrial (300 aa).

The N-terminal 66 residues, M1–R66, are a transit peptide targeting the mitochondrion. A disordered region spans residues G34–Q53. The residue at position 110 (K110) is an N6-succinyllysine.

The protein belongs to the enoyl-CoA hydratase/isomerase family.

The protein localises to the mitochondrion. Its function is as follows. May play a role in fatty acid biosynthesis and insulin sensitivity. The polypeptide is Enoyl-CoA hydratase domain-containing protein 3, mitochondrial (Mus musculus (Mouse)).